The primary structure comprises 126 residues: Large ribosomal subunit protein bL12 (126 aa).

The protein belongs to the bacterial ribosomal protein bL12 family. In terms of assembly, homodimer. Part of the ribosomal stalk of the 50S ribosomal subunit. Forms a multimeric L10(L12)X complex, where L10 forms an elongated spine to which 2 to 4 L12 dimers bind in a sequential fashion. Binds GTP-bound translation factors.

In terms of biological role, forms part of the ribosomal stalk which helps the ribosome interact with GTP-bound translation factors. Is thus essential for accurate translation. This is Large ribosomal subunit protein bL12 from Desulfatibacillum aliphaticivorans.